Here is a 545-residue protein sequence, read N- to C-terminus: Calcium-binding mitochondrial carrier SAL1 (545 aa).

An EF-hand 1 domain is found at 11–46 (QRDIRYACLFKELDVKGNGQVTLDNLISAFEKNDHP). The Ca(2+) site is built by lysine 65, aspartate 70, aspartate 93, aspartate 95, aspartate 97, lysine 99, and glutamate 104. EF-hand domains follow at residues 80 to 115 (NAESQIWNGFQRIDLDHDGKIGINEINRYLSDLDNQ), 120 to 155 (NELNHELSNEKMNKFSRFFEWAFPKRKANIALRGQA), and 156 to 191 (SHKKNTDNDRSKKTTDSDLYVTYDQWRDFLLLVPRK). The Ca(2+) site is built by threonine 161 and serine 166. Solcar repeat units follow at residues 225–332 (IRGF…TKKI), 345–434 (LSKF…LKKW), and 452–541 (LSNL…LKKF). 6 helical membrane-spanning segments follow: residues 231–248 (FIAGGISGVISRTCTAPF), 307–326 (GNGLNVIKVFPESSIKFGSF), 355–368 (GLAGMAAQFSVYPI), 409–428 (GVTVGIVGIFPYAALDLGTF), 458–475 (LPMGAFSGTVGASVVYPI), and 516–535 (GLVPTLAKVCPAVSISYLCY).

Belongs to the mitochondrial carrier (TC 2.A.29) family.

The protein resides in the mitochondrion inner membrane. Its function is as follows. Calcium-dependent mitochondrial solute carrier. This Saccharomyces cerevisiae (Baker's yeast) protein is Calcium-binding mitochondrial carrier SAL1 (SAL1).